We begin with the raw amino-acid sequence, 239 residues long: 1-(5-phosphoribosyl)-5-[(5-phosphoribosylamino)methylideneamino] imidazole-4-carboxamide isomerase (239 aa).

Asp8 serves as the catalytic Proton acceptor. Asp130 serves as the catalytic Proton donor.

This sequence belongs to the HisA/HisF family.

The protein resides in the cytoplasm. The enzyme catalyses 1-(5-phospho-beta-D-ribosyl)-5-[(5-phospho-beta-D-ribosylamino)methylideneamino]imidazole-4-carboxamide = 5-[(5-phospho-1-deoxy-D-ribulos-1-ylimino)methylamino]-1-(5-phospho-beta-D-ribosyl)imidazole-4-carboxamide. Its pathway is amino-acid biosynthesis; L-histidine biosynthesis; L-histidine from 5-phospho-alpha-D-ribose 1-diphosphate: step 4/9. The polypeptide is 1-(5-phosphoribosyl)-5-[(5-phosphoribosylamino)methylideneamino] imidazole-4-carboxamide isomerase (Streptococcus thermophilus (strain ATCC BAA-491 / LMD-9)).